The following is an 87-amino-acid chain: Small ribosomal subunit protein bS20 (87 aa).

Residues 1–11 (MANHKSALKRI) show a composition bias toward basic residues. A disordered region spans residues 1–23 (MANHKSALKRIKQTEKRTERNRH).

Belongs to the bacterial ribosomal protein bS20 family.

Functionally, binds directly to 16S ribosomal RNA. This Geotalea daltonii (strain DSM 22248 / JCM 15807 / FRC-32) (Geobacter daltonii) protein is Small ribosomal subunit protein bS20.